The following is a 553-amino-acid chain: Methyl-coenzyme M reductase II subunit alpha (553 aa).

Residue Gln-150 coordinates coenzyme F430. Residues Arg-228, 259 to 260 (KH), and Arg-273 contribute to the coenzyme B site. Residue His-260 is modified to Pros-methylhistidine. At Arg-274 the chain carries 5-methylarginine. Coenzyme M is bound at residue Tyr-335. Residue Gln-402 is modified to 2-methylglutamine. Tyr-446 contacts coenzyme M. Gly-447 is subject to 1-thioglycine. Asp-452 is modified ((Z)-2,3-didehydroaspartate). Cys-454 bears the S-methylcysteine mark.

This sequence belongs to the methyl-coenzyme M reductase alpha subunit family. MCR is a hexamer of two alpha, two beta, and two gamma chains, forming a dimer of heterotrimers. Coenzyme F430 is required as a cofactor. The alpha subunit contains six modified amino acids near the active site region. Is methylated on His-260, Arg-274, Gln-402 and Cys-454, probably by the action of specific S-adenosylmethionine-dependent methyltransferases. Also contains a thioglycine at position 447, forming a thiopeptide bond. Contains a didehydroaspartate residue at position 452. The methylation on C5 of Arg-274 is a post-translational methylation not essential in vivo, but which plays a role for the stability and structural integrity of MCR.

It carries out the reaction coenzyme B + methyl-coenzyme M = methane + coenzyme M-coenzyme B heterodisulfide. Its pathway is one-carbon metabolism; methyl-coenzyme M reduction; methane from methyl-coenzyme M: step 1/1. Component of the methyl-coenzyme M reductase (MCR) I that catalyzes the reductive cleavage of methyl-coenzyme M (CoM-S-CH3 or 2-(methylthio)ethanesulfonate) using coenzyme B (CoB or 7-mercaptoheptanoylthreonine phosphate) as reductant which results in the production of methane and the mixed heterodisulfide of CoB and CoM (CoM-S-S-CoB). This is the final step in methanogenesis. This Methanothermobacter marburgensis (strain ATCC BAA-927 / DSM 2133 / JCM 14651 / NBRC 100331 / OCM 82 / Marburg) (Methanobacterium thermoautotrophicum) protein is Methyl-coenzyme M reductase II subunit alpha (mrtA).